The following is a 443-amino-acid chain: ATP-dependent protease ATPase subunit HslU (443 aa).

ATP is bound by residues I20, 62-67, D255, E321, and R393; that span reads GVGKTE.

This sequence belongs to the ClpX chaperone family. HslU subfamily. In terms of assembly, a double ring-shaped homohexamer of HslV is capped on each side by a ring-shaped HslU homohexamer. The assembly of the HslU/HslV complex is dependent on binding of ATP.

It is found in the cytoplasm. Its function is as follows. ATPase subunit of a proteasome-like degradation complex; this subunit has chaperone activity. The binding of ATP and its subsequent hydrolysis by HslU are essential for unfolding of protein substrates subsequently hydrolyzed by HslV. HslU recognizes the N-terminal part of its protein substrates and unfolds these before they are guided to HslV for hydrolysis. This Helicobacter pylori (strain G27) protein is ATP-dependent protease ATPase subunit HslU.